We begin with the raw amino-acid sequence, 117 residues long: Type II secretion system protein I (117 aa).

A propeptide spans 1–6 (MKSKRG) (leader sequence). Phe7 is subject to N-methylphenylalanine. Residues 7–27 (FTLLEVLVALAIFATAAISVI) traverse the membrane as a helical segment.

This sequence belongs to the GSP I family. In terms of assembly, type II secretion is composed of four main components: the outer membrane complex, the inner membrane complex, the cytoplasmic secretion ATPase and the periplasm-spanning pseudopilus. Interacts with core component EpsG. Cleaved by prepilin peptidase. Post-translationally, methylated by prepilin peptidase at the amino group of the N-terminal phenylalanine once the leader sequence is cleaved by prepilin peptidase.

It localises to the cell inner membrane. In terms of biological role, component of the type II secretion system required for the energy-dependent secretion of extracellular factors such as proteases and toxins from the periplasm. Part of the pseudopilus tip complex that is critical for the recognition and binding of secretion substrates. In Vibrio cholerae serotype O1 (strain ATCC 39315 / El Tor Inaba N16961), this protein is Type II secretion system protein I (epsI).